We begin with the raw amino-acid sequence, 630 residues long: Pro-interleukin-16 (630 aa).

Disordered stretches follow at residues 30-268 and 316-343; these read ENPG…FPLT and PKEG…ASDT. The segment covering 129–143 has biased composition (low complexity); sequence IRASSSSSIKQRISS. The residue at position 220 (serine 220) is a Phosphoserine. The span at 321-343 shows a compositional bias: polar residues; it reads SPTSSSNEDSAANGSAETSASDT. The interval 404-500 is interaction with PPP1R12A, PPP1R12B and PPP1R12C; it reads KQLDSIHVTI…IVTRKLTAES (97 aa). PDZ domains follow at residues 410-495 and 532-617; these read HVTI…VTRK and TVTL…IRRK.

As to quaternary structure, homotetramer. Pro-interleukin-16 interacts (via PDZ 2 domain) with PPP1R12A, PPP1R12B and PPP1R12C. Pro-interleukin-16 interacts with GRIN2A. Pro-interleukin-16 interacts with GABPB1. Pro-interleukin-16 interacts (via PDZ 3 domain) with HDAC3.

The protein localises to the secreted. Its subcellular location is the cytoplasm. The protein resides in the nucleus. Interleukin-16 stimulates a migratory response in CD4+ lymphocytes, monocytes, and eosinophils. Primes CD4+ T-cells for IL-2 and IL-15 responsiveness. Also induces T-lymphocyte expression of interleukin 2 receptor. Ligand for CD4. Functionally, pro-interleukin-16 is involved in cell cycle progression in T-cells. Appears to be involved in transcriptional regulation of SKP2 and is probably part of a transcriptional repression complex on the core promoter of the SKP2 gene. May act as a scaffold for GABPB1 (the DNA-binding subunit the GABP transcription factor complex) and HDAC3 thus maintaining transcriptional repression and blocking cell cycle progression in resting T-cells. The chain is Pro-interleukin-16 (IL16) from Macaca mulatta (Rhesus macaque).